The following is a 957-amino-acid chain: Kinesin heavy chain isoform 5C (957 aa).

Residues 8–327 (SIKVMCRFRP…LMFGQRAKTI (320 aa)) form the Kinesin motor domain. ATP contacts are provided by Gln-87, Ser-89, Ser-90, Gly-91, Lys-92, Thr-93, His-94, and Lys-99. The interval 174–315 (VSSPEEVMDV…PSVFNEAETK (142 aa)) is microtubule-binding. A coiled-coil region spans residues 406 to 923 (VAGISTEEKE…ARRAHSAQIA (518 aa)). The interval 859–956 (RCELPKLEKR…GSSSNSTHYQ (98 aa)) is globular. Residues 911 to 957 (KNMARRAHSAQIAKPIRPGHYPASSPTAVHAIRGGGGSSSNSTHYQK) are disordered.

The protein belongs to the TRAFAC class myosin-kinesin ATPase superfamily. Kinesin family. Kinesin subfamily. As to quaternary structure, oligomer composed of two heavy chains and two light chains. Interacts with GRIP1 and KLC3. Interacts with TRAK1. Interacts with ZFYVE27. Highest expression in brain, prostate and testis, and moderate expression in kidney, small intestine and ovary.

It is found in the cytoplasm. The protein resides in the cytoskeleton. Its subcellular location is the cell projection. The protein localises to the dendrite. The catalysed reaction is ATP + H2O = ADP + phosphate + H(+). In terms of biological role, microtubule-associated force-producing protein that may play a role in organelle transport. Has ATPase activity. Involved in synaptic transmission. Mediates dendritic trafficking of mRNAs. Required for anterograde axonal transportation of MAPK8IP3/JIP3 which is essential for MAPK8IP3/JIP3 function in axon elongation. This chain is Kinesin heavy chain isoform 5C (KIF5C), found in Homo sapiens (Human).